Here is a 414-residue protein sequence, read N- to C-terminus: F-box protein At3g47030 (414 aa).

Positions 1 to 24 (MSGMLGLSAVMGKRPKQQVTARPR) are disordered. The 50-residue stretch at 28 to 77 (IEKPEEIPDDLLIDVFSRLSIEDVARCRCLSRFWSSILRRRYFTELFHKM) folds into the F-box domain.

The polypeptide is F-box protein At3g47030 (Arabidopsis thaliana (Mouse-ear cress)).